We begin with the raw amino-acid sequence, 274 residues long: 2-dehydro-3-deoxyphosphooctonate aldolase (274 aa).

The protein belongs to the KdsA family.

It localises to the cytoplasm. The enzyme catalyses D-arabinose 5-phosphate + phosphoenolpyruvate + H2O = 3-deoxy-alpha-D-manno-2-octulosonate-8-phosphate + phosphate. It functions in the pathway carbohydrate biosynthesis; 3-deoxy-D-manno-octulosonate biosynthesis; 3-deoxy-D-manno-octulosonate from D-ribulose 5-phosphate: step 2/3. Its pathway is bacterial outer membrane biogenesis; lipopolysaccharide biosynthesis. This Rickettsia conorii (strain ATCC VR-613 / Malish 7) protein is 2-dehydro-3-deoxyphosphooctonate aldolase.